The following is a 170-amino-acid chain: Shikimate kinase (170 aa).

Leu-11–Thr-16 is a binding site for ATP. Residue Ser-15 participates in Mg(2+) binding. 3 residues coordinate substrate: Asp-33, Arg-57, and Gly-79. Residue Arg-119 participates in ATP binding. Substrate is bound at residue Arg-137.

Belongs to the shikimate kinase family. In terms of assembly, monomer. The cofactor is Mg(2+).

It localises to the cytoplasm. It carries out the reaction shikimate + ATP = 3-phosphoshikimate + ADP + H(+). Its pathway is metabolic intermediate biosynthesis; chorismate biosynthesis; chorismate from D-erythrose 4-phosphate and phosphoenolpyruvate: step 5/7. Catalyzes the specific phosphorylation of the 3-hydroxyl group of shikimic acid using ATP as a cosubstrate. This chain is Shikimate kinase, found in Clostridium botulinum (strain Kyoto / Type A2).